The primary structure comprises 727 residues: Iron-sulfur clusters transporter ATM1, mitochondrial (727 aa).

The transit peptide at 1-25 directs the protein to the mitochondrion; sequence MLIGGAQNRLYQLRTSNILGLLRTR. The Mitochondrial matrix segment spans residues 26-138; the sequence is SALRVGSKVE…PRGNTKVKVR (113 aa). The tract at residues 87–107 is disordered; it reads KSKLPNEDTAHNASEKNSKKT. The segment covering 90 to 107 has biased composition (basic and acidic residues); that stretch reads LPNEDTAHNASEKNSKKT. The chain crosses the membrane as a helical span at residues 139–160; that stretch reads VLLALALLIGAKVLNVQVPFFF. An ABC transmembrane type-1 domain is found at 139-429; it reads VLLALALLIG…LGSVYRELKQ (291 aa). At 161-183 the chain is on the mitochondrial intermembrane side; it reads KQIIDGMNVDWSDATVALPAALG. A helical transmembrane segment spans residues 184–207; that stretch reads LTIMCYGLARFGAVLFGELRNAIF. At 208–256 the chain is on the mitochondrial matrix side; sequence ARVAQNAIRNVSLQTFEHLMKLDLGWHLSRQTGGLTRAMDRGTKGISYV. The helical transmembrane segment at 257 to 280 threads the bilayer; sequence LSAMVFHIIPITFEISVVCGILTY. Residue Q281 is a topological domain, mitochondrial intermembrane. Residues 282–302 traverse the membrane as a helical segment; sequence FGASFAGITFTTMLLYSIFTI. Topologically, residues 303 to 368 are mitochondrial matrix; sequence RTTAWRTRFR…SQVKVAQSLA (66 aa). Residues 308–312 and 371–374 each bind glutathione; these read RTRFR and NSGQ. Residues 369–387 form a helical membrane-spanning segment; the sequence is FLNSGQSLIFTTALTGMMY. Residues 388–402 lie on the Mitochondrial intermembrane side of the membrane; that stretch reads MGCTGVIGGDLTVGD. A helical membrane pass occupies residues 403-424; that stretch reads LVLINQLVFQLSVPLNFLGSVY. G421 is a glutathione binding site. Residues 425 to 727 lie on the Mitochondrial matrix side of the membrane; the sequence is RELKQSLIDM…ETLEKLNKSI (303 aa). Residues 465 to 701 enclose the ABC transporter domain; it reads IKFENVTFGY…ENSLYKELWR (237 aa). ATP is bound by residues Y474 and 498-509; that span reads GPSGSGKSTVLK.

This sequence belongs to the ABC transporter superfamily. ABCB family. Heavy Metal importer (TC 3.A.1.210) subfamily. As to quaternary structure, homodimer.

The protein resides in the mitochondrion inner membrane. Its function is as follows. Performs an essential function in the generation of cytoplasmic iron-sulfur proteins by mediating the ATP-dependent export of Fe/S cluster precursors synthesized by NFS1 and other mitochondrial proteins. Hydrolyzes ATP. Binds glutathione and may function by transporting a glutathione-conjugated iron-sulfur compound. The sequence is that of Iron-sulfur clusters transporter ATM1, mitochondrial from Candida glabrata (strain ATCC 2001 / BCRC 20586 / JCM 3761 / NBRC 0622 / NRRL Y-65 / CBS 138) (Yeast).